A 337-amino-acid polypeptide reads, in one-letter code: Glyceraldehyde-3-phosphate dehydrogenase (337 aa).

NAD(+) contacts are provided by residues 12-13 (RI), Asp-34, and Arg-79. D-glyceraldehyde 3-phosphate-binding positions include 150-152 (SCT), Thr-181, 210-211 (TG), and Arg-233. Residue Cys-151 is the Nucleophile of the active site. Residue Asn-315 participates in NAD(+) binding.

Belongs to the glyceraldehyde-3-phosphate dehydrogenase family. Homotetramer.

The protein localises to the cytoplasm. The enzyme catalyses D-glyceraldehyde 3-phosphate + phosphate + NAD(+) = (2R)-3-phospho-glyceroyl phosphate + NADH + H(+). The protein operates within carbohydrate degradation; glycolysis; pyruvate from D-glyceraldehyde 3-phosphate: step 1/5. This chain is Glyceraldehyde-3-phosphate dehydrogenase (GPD), found in Omphalotus olearius (Jack o'lantern).